We begin with the raw amino-acid sequence, 377 residues long: Putative zinc metalloprotease Atu1380 (377 aa).

His29 provides a ligand contact to Zn(2+). The active site involves Glu30. His33 contacts Zn(2+). A run of 3 helical transmembrane segments spans residues 118 to 140, 299 to 321, and 351 to 373; these read VAAG…FGIY, LGIS…LNLM, and VAFR…NDIS. One can recognise a PDZ domain in the interval 129–202; sequence AILIFAVLFG…TPITVTVERA (74 aa).

It belongs to the peptidase M50B family. The cofactor is Zn(2+).

It is found in the cell inner membrane. This is Putative zinc metalloprotease Atu1380 from Agrobacterium fabrum (strain C58 / ATCC 33970) (Agrobacterium tumefaciens (strain C58)).